The primary structure comprises 456 residues: Putative dihydroorotase (456 aa).

The protein belongs to the metallo-dependent hydrolases superfamily. DHOase family. Class I DHOase subfamily.

It carries out the reaction (S)-dihydroorotate + H2O = N-carbamoyl-L-aspartate + H(+). Its pathway is pyrimidine metabolism; UMP biosynthesis via de novo pathway; (S)-dihydroorotate from bicarbonate: step 3/3. Functionally, catalyzes the reversible cyclization of carbamoyl aspartate to dihydroorotate. This Rhodopirellula baltica (strain DSM 10527 / NCIMB 13988 / SH1) protein is Putative dihydroorotase.